The primary structure comprises 820 residues: Phenylalanine--tRNA ligase beta subunit (820 aa).

One can recognise a tRNA-binding domain in the interval 39–150; that stretch reads PAPVGGVLLV…GTAAPGTPLR (112 aa). Positions 435–510 constitute a B5 domain; sequence EVPQTITTTG…RLHGFTELPE (76 aa). Asp488, Asp494, Glu497, and Glu498 together coordinate Mg(2+). An FDX-ACB domain is found at 727–818; it reads SRAPAAWRDL…AVKARGWAIR (92 aa).

Belongs to the phenylalanyl-tRNA synthetase beta subunit family. Type 1 subfamily. As to quaternary structure, tetramer of two alpha and two beta subunits. The cofactor is Mg(2+).

It localises to the cytoplasm. It catalyses the reaction tRNA(Phe) + L-phenylalanine + ATP = L-phenylalanyl-tRNA(Phe) + AMP + diphosphate + H(+). This is Phenylalanine--tRNA ligase beta subunit (pheT) from Deinococcus radiodurans (strain ATCC 13939 / DSM 20539 / JCM 16871 / CCUG 27074 / LMG 4051 / NBRC 15346 / NCIMB 9279 / VKM B-1422 / R1).